Consider the following 187-residue polypeptide: Frequenin-1 (187 aa).

Gly-2 carries N-myristoyl glycine lipidation. 4 EF-hand domains span residues Glu-24 to Gly-59, Asp-60 to Gly-95, Asn-96 to Met-131, and Thr-143 to Ile-178. Ca(2+)-binding residues include Asp-73, Asn-75, Asp-77, Ser-79, Glu-84, Asp-109, Asp-111, Asp-113, Tyr-115, Glu-120, Asp-156, Asn-158, Asp-160, Lys-162, and Glu-167.

It belongs to the recoverin family. As to quaternary structure, in contrast to Frq2, does not interact with ric8a. As to expression, enriched in synapses, such as the motor nerve endings at neuromuscular junctions. In the embryo, highly expressed in the ventral ganglia.

Its subcellular location is the cytoplasm. Its function is as follows. Ca(2+)-dependent modulation of synaptic efficacy. Also plays a role in axon terminal morphology. The protein is Frequenin-1 (Frq1) of Drosophila melanogaster (Fruit fly).